A 586-amino-acid chain; its full sequence is Penicillin-binding protein activator LpoA (586 aa).

Residues 1–26 form the signal peptide; sequence MLSILMQGLRLKKCFLPILVMFFLAG. A lipid anchor (N-palmitoyl cysteine) is attached at Cys-27. Residue Cys-27 is the site of S-diacylglycerol cysteine attachment.

Belongs to the LpoA family. In terms of assembly, interacts with PBP1a.

Its subcellular location is the cell outer membrane. Regulator of peptidoglycan synthesis that is essential for the function of penicillin-binding protein 1A (PBP1a). This Histophilus somni (strain 2336) (Haemophilus somnus) protein is Penicillin-binding protein activator LpoA.